We begin with the raw amino-acid sequence, 369 residues long: Methylthioribose-1-phosphate isomerase (369 aa).

Position 1 is an N-acetylmethionine (Met1). The residue at position 158 (Arg158) is an Omega-N-methylarginine. The active-site Proton donor is the Asp248. Ser366 is modified (phosphoserine).

The protein belongs to the eIF-2B alpha/beta/delta subunits family. MtnA subfamily.

Its subcellular location is the cytoplasm. The protein localises to the nucleus. It carries out the reaction 5-(methylsulfanyl)-alpha-D-ribose 1-phosphate = 5-(methylsulfanyl)-D-ribulose 1-phosphate. It functions in the pathway amino-acid biosynthesis; L-methionine biosynthesis via salvage pathway; L-methionine from S-methyl-5-thio-alpha-D-ribose 1-phosphate: step 1/6. Catalyzes the interconversion of methylthioribose-1-phosphate (MTR-1-P) into methylthioribulose-1-phosphate (MTRu-1-P). This chain is Methylthioribose-1-phosphate isomerase (Mri1), found in Mus musculus (Mouse).